A 187-amino-acid polypeptide reads, in one-letter code: UPF0398 protein SAB1311c (187 aa).

It belongs to the UPF0398 family.

The chain is UPF0398 protein SAB1311c from Staphylococcus aureus (strain bovine RF122 / ET3-1).